The chain runs to 99 residues: Aspartyl/glutamyl-tRNA(Asn/Gln) amidotransferase subunit C (99 aa).

Belongs to the GatC family. Heterotrimer of A, B and C subunits.

It catalyses the reaction L-glutamyl-tRNA(Gln) + L-glutamine + ATP + H2O = L-glutaminyl-tRNA(Gln) + L-glutamate + ADP + phosphate + H(+). The catalysed reaction is L-aspartyl-tRNA(Asn) + L-glutamine + ATP + H2O = L-asparaginyl-tRNA(Asn) + L-glutamate + ADP + phosphate + 2 H(+). In terms of biological role, allows the formation of correctly charged Asn-tRNA(Asn) or Gln-tRNA(Gln) through the transamidation of misacylated Asp-tRNA(Asn) or Glu-tRNA(Gln) in organisms which lack either or both of asparaginyl-tRNA or glutaminyl-tRNA synthetases. The reaction takes place in the presence of glutamine and ATP through an activated phospho-Asp-tRNA(Asn) or phospho-Glu-tRNA(Gln). This is Aspartyl/glutamyl-tRNA(Asn/Gln) amidotransferase subunit C from Burkholderia mallei (strain NCTC 10247).